The following is a 236-amino-acid chain: 1-(5-phosphoribosyl)-5-[(5-phosphoribosylamino)methylideneamino] imidazole-4-carboxamide isomerase (236 aa).

Aspartate 8 acts as the Proton acceptor in catalysis. The active-site Proton donor is aspartate 129.

Belongs to the HisA/HisF family.

It is found in the cytoplasm. The enzyme catalyses 1-(5-phospho-beta-D-ribosyl)-5-[(5-phospho-beta-D-ribosylamino)methylideneamino]imidazole-4-carboxamide = 5-[(5-phospho-1-deoxy-D-ribulos-1-ylimino)methylamino]-1-(5-phospho-beta-D-ribosyl)imidazole-4-carboxamide. It participates in amino-acid biosynthesis; L-histidine biosynthesis; L-histidine from 5-phospho-alpha-D-ribose 1-diphosphate: step 4/9. In Methanosphaerula palustris (strain ATCC BAA-1556 / DSM 19958 / E1-9c), this protein is 1-(5-phosphoribosyl)-5-[(5-phosphoribosylamino)methylideneamino] imidazole-4-carboxamide isomerase.